A 702-amino-acid polypeptide reads, in one-letter code: Rho GTPase-activating protein 22 (702 aa).

Residues 43-151 form the PH domain; it reads PVLKAGWLRK…WVQAIRRVIW (109 aa). The 195-residue stretch at 161 to 355 folds into the Rho-GAP domain; that stretch reads QRLEDTVHHE…VLIRKHGQLF (195 aa). 4 disordered regions span residues 360–433, 438–457, 480–511, and 555–596; these read LEEP…HTLP, SFRQ…SSLE, RASS…FSST, and PSPL…TQAH. Phosphoserine occurs at positions 365 and 397. Polar residues-rich tracts occupy residues 407–421, 438–456, 491–504, and 581–594; these read SRTS…TGPA, SFRQ…NSSL, GSAQ…NVPP, and SGSS…SPTQ. The stretch at 594 to 691 forms a coiled coil; the sequence is QAHVRRCRAL…EEFFSTLGSL (98 aa).

As to quaternary structure, interacts with VEZF1. As to expression, predominantly present in endothelial cells (at protein level).

The protein resides in the cytoplasm. The protein localises to the nucleus. Rho GTPase-activating protein involved in the signal transduction pathway that regulates endothelial cell capillary tube formation during angiogenesis. Acts as a GTPase activator for the RAC1 by converting it to an inactive GDP-bound state. Inhibits RAC1-dependent lamellipodia formation. May also play a role in transcription regulation via its interaction with VEZF1, by regulating activity of the endothelin-1 (EDN1) promoter. In Mus musculus (Mouse), this protein is Rho GTPase-activating protein 22 (Arhgap22).